Reading from the N-terminus, the 174-residue chain is uncharacterized protein (174 aa).

The disordered stretch occupies residues 153–174 (RSGNHSAGNVHPASPMIKVQGG).

This is an uncharacterized protein from Sinorhizobium fredii (strain NBRC 101917 / NGR234).